A 465-amino-acid chain; its full sequence is 6-phospho-beta-glucosidase (465 aa).

The Proton donor role is filled by Glu-173. Glu-362 serves as the catalytic Nucleophile.

Belongs to the glycosyl hydrolase 1 family.

The enzyme catalyses 6-phospho-beta-D-glucosyl-(1-&gt;4)-D-glucose + H2O = D-glucose 6-phosphate + D-glucose. Its pathway is carbohydrate metabolism; beta-glucoside metabolism. This is 6-phospho-beta-glucosidase (arbB) from Dickeya chrysanthemi (Pectobacterium chrysanthemi).